The chain runs to 701 residues: Low-density lipoprotein receptor-related protein 12 (701 aa).

Over 1-334 (GKSEEPNCAC…ENCPVIVPTR (334 aa)) the chain is Extracellular. LDL-receptor class A domains are found at residues 7-43 (NCAC…EICA) and 56-97 (PCAY…IDCD). 7 disulfide bridges follow: cysteine 8–cysteine 20, cysteine 15–cysteine 33, cysteine 27–cysteine 42, cysteine 57–cysteine 74, cysteine 64–cysteine 87, cysteine 81–cysteine 96, and cysteine 101–cysteine 127. In terms of domain architecture, CUB spans 101–214 (CGQWLKYFYG…RGFNATYQVD (114 aa)). Residues asparagine 126 and asparagine 208 are each glycosylated (N-linked (GlcNAc...) asparagine). 3 consecutive LDL-receptor class A domains span residues 216–253 (FCLP…INCT), 254–291 (MCQK…KNCF), and 292–328 (FCQP…ENCP). 9 cysteine pairs are disulfide-bonded: cysteine 217–cysteine 230, cysteine 224–cysteine 243, cysteine 237–cysteine 252, cysteine 255–cysteine 268, cysteine 262–cysteine 281, cysteine 275–cysteine 290, cysteine 293–cysteine 305, cysteine 300–cysteine 318, and cysteine 312–cysteine 327. The N-linked (GlcNAc...) asparagine glycan is linked to asparagine 251. A glycan (N-linked (GlcNAc...) asparagine) is linked at asparagine 283. Residues 335-355 (VITAAVIGSLICGLLLVIALG) form a helical membrane-spanning segment. At 356-701 (CTCKLYSLRM…TSDDEALLLC (346 aa)) the chain is on the cytoplasmic side. 4 disordered regions span residues 465–520 (ADGD…LPQK), 535–565 (ASSS…SPAR), 590–612 (SSVS…REDD), and 643–665 (DQGQ…SNRD). Polar residues-rich tracts occupy residues 590 to 599 (SSVSQNQSPL) and 643 to 656 (DQGQ…SATN).

This sequence belongs to the LDLR family. May interact with RACK1, ZFYVE9 and NMRK2.

The protein resides in the membrane. The protein localises to the coated pit. In terms of biological role, probable receptor, which may be involved in the internalization of lipophilic molecules and/or signal transduction. May act as a tumor suppressor. The polypeptide is Low-density lipoprotein receptor-related protein 12 (LRP12) (Macaca fascicularis (Crab-eating macaque)).